A 185-amino-acid chain; its full sequence is MDLSSLRPAAGAVKNKKRVGRGQGSGNGTTAGKGNKGQQARSGYQKPINEGGQVPVYRRLPKFGFTSLQRKPIKTLNLSQLEDWIQDGLITGEEISVYDLKALCSGSYADYFKILGNGEITTAIKITAHFFSKSAEEKIIKAGGQVIKAYRTLEEASKIRDLSVEEALLKPKAKLVKRVKKSAKP.

The interval 1–51 (MDLSSLRPAAGAVKNKKRVGRGQGSGNGTTAGKGNKGQQARSGYQKPINEG) is disordered. Residues 21 to 35 (RGQGSGNGTTAGKGN) show a composition bias toward gly residues.

This sequence belongs to the universal ribosomal protein uL15 family. As to quaternary structure, part of the 50S ribosomal subunit.

Functionally, binds to the 23S rRNA. The protein is Large ribosomal subunit protein uL15 of Chlorobium phaeobacteroides (strain DSM 266 / SMG 266 / 2430).